Reading from the N-terminus, the 279-residue chain is HTH-type transcriptional regulator HdfR (279 aa).

In terms of domain architecture, HTH lysR-type spans Met-1–Thr-58. The H-T-H motif DNA-binding region spans Phe-18–Arg-37.

The protein belongs to the LysR transcriptional regulatory family.

Functionally, negatively regulates the transcription of the flagellar master operon flhDC by binding to the upstream region of the operon. The polypeptide is HTH-type transcriptional regulator HdfR (Escherichia coli (strain ATCC 8739 / DSM 1576 / NBRC 3972 / NCIMB 8545 / WDCM 00012 / Crooks)).